We begin with the raw amino-acid sequence, 185 residues long: Elongation factor P (185 aa).

This sequence belongs to the elongation factor P family.

It is found in the cytoplasm. It functions in the pathway protein biosynthesis; polypeptide chain elongation. Involved in peptide bond synthesis. Stimulates efficient translation and peptide-bond synthesis on native or reconstituted 70S ribosomes in vitro. Probably functions indirectly by altering the affinity of the ribosome for aminoacyl-tRNA, thus increasing their reactivity as acceptors for peptidyl transferase. This chain is Elongation factor P, found in Staphylococcus aureus (strain Mu3 / ATCC 700698).